Reading from the N-terminus, the 433-residue chain is Steroid hormone receptor ERR2 (433 aa).

The tract at residues methionine 1–alanine 41 is disordered. Residues histidine 32–alanine 41 show a composition bias toward low complexity. The segment at tyrosine 93 to lysine 211 is interaction with NANOG. A DNA-binding region (nuclear receptor) is located at residues lysine 100 to lysine 186. NR C4-type zinc fingers lie at residues cysteine 103–cysteine 123 and cysteine 139–cysteine 163. An essential for ESRRB transcriptional activity and interaction with NCOA3 region spans residues proline 203–valine 433. Positions proline 208–lysine 432 constitute an NR LBD domain.

This sequence belongs to the nuclear hormone receptor family. NR3 subfamily. Binds DNA as a monomer. Interacts with NR0B1; represses ESRRB activity at the GATA6 promoter. Interacts with NANOG; reciprocally modulates their transcriptional activities and activates POU5F1 expression. Interacts with NCOA3; mediates the interaction between ESRRB and RNA polymerase II complexes and allows NCOA3 corecruitment to ESRRB, KLF4, NANOG, and SOX2 enhancer regions to trigger ESRRB-dependent gene activation involved in self-renewal and pluripotency. Interacts with KDM1A; co-occupes the core set of ESRRB targets including ELF5 and EOMES. Interacts with the multiprotein complex Integrator, at least composed of INTS1, INTS2, INTS3, INTS4, INTS5, INTS6, INTS7, INTS8, INTS9/RC74, INTS10, INTS11/CPSF3L and INTS12; ESRRB is probably not a core component of the integrator complex and associates to integrator via its interaction with INTS1 and INTS9; attracts the transcriptional machinery. Interacts with JARID2. Interacts with POU5F1; recruits ESRRB near the POU5F1-SOX2 element in the NANOG proximal promoter leading to activation of NANOG expression; the interaction is DNA independent. In terms of processing, acetylated by PCAF/KAT2 (in vitro).

Its subcellular location is the nucleus. The protein resides in the cytoplasm. The protein localises to the chromosome. In terms of biological role, transcription factor that binds a canonical ESRRB recognition (ERRE) sequence 5'TCAAGGTCA-3' localized on promoter and enhancer of targets genes regulating their expression or their transcription activity. Plays a role, in a LIF independent manner, in maintainance of self-renewal and pluripotency of embryonic and trophoblast stem cells through different signaling pathways including FGF signaling pathway and Wnt signaling pathways. Involved in morula development (2-16 cells embryos) by acting as a regulator at the 8-cell stage. Upon FGF signaling pathway activation, interacts with KDM1A by directly binding to enhancer site of ELF5 and EOMES and activating their transcription leading to self-renewal of trophoblast stem cells. Also regulates expression of multiple rod-specific genes and is required for survival of this cell type. Plays a role as transcription factor activator of GATA6, NR0B1, POU5F1 and PERM1. Plays a role as transcription factor repressor of NFE2L2 transcriptional activity and ESR1 transcriptional activity. During mitosis remains bound to a subset of interphase target genes, including pluripotency regulators, through the canonical ESRRB recognition (ERRE) sequence, leading to their transcriptional activation in early G1 phase. Can coassemble on structured DNA elements with other transcription factors like SOX2, POU5F1, KDM1A and NCOA3 to trigger ESRRB-dependent gene activation. This mechanism, in the case of SOX2 corecruitment prevents the embryonic stem cells (ESCs) to epiblast stem cells (EpiSC) transition through positive regulation of NR0B1 that inhibits the EpiSC transcriptional program. Also plays a role inner ear development by controlling expression of ion channels and transporters and in early placentation. The polypeptide is Steroid hormone receptor ERR2 (Rattus norvegicus (Rat)).